We begin with the raw amino-acid sequence, 159 residues long: Large ribosomal subunit protein uL10 (159 aa).

The protein belongs to the universal ribosomal protein uL10 family. In terms of assembly, part of the ribosomal stalk of the 50S ribosomal subunit. The N-terminus interacts with L11 and the large rRNA to form the base of the stalk. The C-terminus forms an elongated spine to which L12 dimers bind in a sequential fashion forming a multimeric L10(L12)X complex.

In terms of biological role, forms part of the ribosomal stalk, playing a central role in the interaction of the ribosome with GTP-bound translation factors. This Campylobacter jejuni (strain RM1221) protein is Large ribosomal subunit protein uL10.